The primary structure comprises 245 residues: Acyl-protein thioesterase 1 (245 aa).

Residues serine 126, aspartate 182, and histidine 214 each act as charge relay system in the active site.

This sequence belongs to the AB hydrolase superfamily. AB hydrolase 2 family.

The protein resides in the cytoplasm. It localises to the nucleus. It carries out the reaction S-hexadecanoyl-L-cysteinyl-[protein] + H2O = L-cysteinyl-[protein] + hexadecanoate + H(+). Hydrolyzes fatty acids from S-acylated cysteine residues in proteins with a strong preference for palmitoylated G-alpha proteins over other acyl substrates. Mediates the deacylation of G-alpha proteins such as GPA1 in vivo, but has weak or no activity toward palmitoylated Ras proteins. Has weak lysophospholipase activity in vitro; however such activity may not exist in vivo. This is Acyl-protein thioesterase 1 from Neurospora crassa (strain ATCC 24698 / 74-OR23-1A / CBS 708.71 / DSM 1257 / FGSC 987).